We begin with the raw amino-acid sequence, 494 residues long: DNA-directed DNA/RNA polymerase mu (494 aa).

Residues 1 to 24 (MLPKRRRARVGSPSGDAASSTPPS) form a disordered region. A Phosphoserine modification is found at Ser-12. The 101-residue stretch at 22–122 (PPSTRFPGVA…QPVPVECRHR (101 aa)) folds into the BRCT domain. The interval 323–332 (RGKLQGHDVD) is involved in ssDNA binding. Residues Asp-330, Asp-332, and Asp-418 each coordinate Mg(2+).

The protein belongs to the DNA polymerase type-X family. It depends on Mg(2+) as a cofactor. As to expression, expressed in a number of tissues. Abundant in thymus.

Its subcellular location is the nucleus. It catalyses the reaction DNA(n) + a 2'-deoxyribonucleoside 5'-triphosphate = DNA(n+1) + diphosphate. Functionally, gap-filling polymerase involved in repair of DNA double-strand breaks by non-homologous end joining (NHEJ). Participates in immunoglobulin (Ig) light chain gene rearrangement in V(D)J recombination. This Homo sapiens (Human) protein is DNA-directed DNA/RNA polymerase mu (POLM).